A 171-amino-acid chain; its full sequence is ATP synthase subunit b (171 aa).

A helical transmembrane segment spans residues 2-22 (VLVKMALGFLILLSPLCAMEL).

It belongs to the ATPase B chain family. As to quaternary structure, F-type ATPases have 2 components, F(1) - the catalytic core - and F(0) - the membrane proton channel. F(1) has five subunits: alpha(3), beta(3), gamma(1), delta(1), epsilon(1). F(0) has three main subunits: a(1), b(2) and c(10-14). The alpha and beta chains form an alternating ring which encloses part of the gamma chain. F(1) is attached to F(0) by a central stalk formed by the gamma and epsilon chains, while a peripheral stalk is formed by the delta and b chains.

The protein resides in the cell inner membrane. Its function is as follows. F(1)F(0) ATP synthase produces ATP from ADP in the presence of a proton or sodium gradient. F-type ATPases consist of two structural domains, F(1) containing the extramembraneous catalytic core and F(0) containing the membrane proton channel, linked together by a central stalk and a peripheral stalk. During catalysis, ATP synthesis in the catalytic domain of F(1) is coupled via a rotary mechanism of the central stalk subunits to proton translocation. Functionally, component of the F(0) channel, it forms part of the peripheral stalk, linking F(1) to F(0). This chain is ATP synthase subunit b, found in Helicobacter acinonychis (strain Sheeba).